Here is a 165-residue protein sequence, read N- to C-terminus: Crossover junction endodeoxyribonuclease RuvC (165 aa).

Residues D8, E67, and D139 contribute to the active site. Mg(2+) contacts are provided by D8, E67, and D139.

Belongs to the RuvC family. In terms of assembly, homodimer which binds Holliday junction (HJ) DNA. The HJ becomes 2-fold symmetrical on binding to RuvC with unstacked arms; it has a different conformation from HJ DNA in complex with RuvA. In the full resolvosome a probable DNA-RuvA(4)-RuvB(12)-RuvC(2) complex forms which resolves the HJ. It depends on Mg(2+) as a cofactor.

It localises to the cytoplasm. The catalysed reaction is Endonucleolytic cleavage at a junction such as a reciprocal single-stranded crossover between two homologous DNA duplexes (Holliday junction).. Functionally, the RuvA-RuvB-RuvC complex processes Holliday junction (HJ) DNA during genetic recombination and DNA repair. Endonuclease that resolves HJ intermediates. Cleaves cruciform DNA by making single-stranded nicks across the HJ at symmetrical positions within the homologous arms, yielding a 5'-phosphate and a 3'-hydroxyl group; requires a central core of homology in the junction. The consensus cleavage sequence is 5'-(A/T)TT(C/G)-3'. Cleavage occurs on the 3'-side of the TT dinucleotide at the point of strand exchange. HJ branch migration catalyzed by RuvA-RuvB allows RuvC to scan DNA until it finds its consensus sequence, where it cleaves and resolves the cruciform DNA. The polypeptide is Crossover junction endodeoxyribonuclease RuvC (Alkalilimnicola ehrlichii (strain ATCC BAA-1101 / DSM 17681 / MLHE-1)).